We begin with the raw amino-acid sequence, 757 residues long: Polyribonucleotide nucleotidyltransferase (757 aa).

Residues Asp-531 and Asp-537 each coordinate Mg(2+). One can recognise a KH domain in the interval 597–656 (PRVTTIRVPVDKIGEVIGPKGKIINAITEETGAQISIEDDGTVFVGATDGPSAQAAIDRI). One can recognise an S1 motif domain in the interval 668–737 (GERFLGTVVK…KRGKISLVLV (70 aa)).

The protein belongs to the polyribonucleotide nucleotidyltransferase family. It depends on Mg(2+) as a cofactor.

The protein localises to the cytoplasm. It catalyses the reaction RNA(n+1) + phosphate = RNA(n) + a ribonucleoside 5'-diphosphate. In terms of biological role, involved in mRNA degradation. Catalyzes the phosphorolysis of single-stranded polyribonucleotides processively in the 3'- to 5'-direction. The protein is Polyribonucleotide nucleotidyltransferase of Mycolicibacterium paratuberculosis (strain ATCC BAA-968 / K-10) (Mycobacterium paratuberculosis).